The chain runs to 94 residues: Integration host factor subunit beta (94 aa).

Belongs to the bacterial histone-like protein family. As to quaternary structure, heterodimer of an alpha and a beta chain.

This protein is one of the two subunits of integration host factor, a specific DNA-binding protein that functions in genetic recombination as well as in transcriptional and translational control. The sequence is that of Integration host factor subunit beta (ihfB) from Pasteurella multocida (strain Pm70).